We begin with the raw amino-acid sequence, 1122 residues long: Adhesin P1 (1122 aa).

A signal peptide spans 1–26 (MKKLIFKLSVGITPLALIGLGSFGLA). 3 disordered regions span residues 182–208 (ATGD…GGGA), 244–273 (DYNS…GGRT), and 541–562 (GALQ…SNGN). The span at 195-208 (AGGGSSSSAAGGGA) shows a compositional bias: gly residues. The span at 259 to 273 (LDSSESSESINGGRT) shows a compositional bias: polar residues. The chain crosses the membrane as a helical span at residues 1001 to 1021 (AISIPIIIIALALALGLGIGI). Residues 1066–1122 (KTPQMLQANKKDGASSPSKPSAPAAKKPAGPTKPSAPGAKPTAPAKPKAPAPTKKIE) are disordered. Low complexity predominate over residues 1079–1122 (ASSPSKPSAPAAKKPAGPTKPSAPGAKPTAPAKPKAPAPTKKIE).

The protein belongs to the adhesin P1 family.

The protein localises to the cell membrane. Its function is as follows. Could be involved in cytadherence. The sequence is that of Adhesin P1 (gapA) from Mycoplasmoides gallisepticum (strain R(low / passage 15 / clone 2)) (Mycoplasma gallisepticum).